The sequence spans 227 residues: 2-heptyl-1-hydroxyquinolin-4(1H)-one methyltransferase (227 aa).

It belongs to the methyltransferase superfamily. As to quaternary structure, monomer.

The protein resides in the cytoplasm. It catalyses the reaction 2-heptyl-1-hydroxy-4(1H)-quinolinone + S-adenosyl-L-methionine = 2-heptyl-1-methoxy-4(1H)-quinolinone + S-adenosyl-L-homocysteine + H(+). It carries out the reaction 3-bromo-2-heptyl-1-hydroxy-4(1H)-quinolinone + S-adenosyl-L-methionine = 3-bromo-2-heptyl-1-methoxy-4(1H)-quinolinone + S-adenosyl-L-homocysteine + H(+). Its function is as follows. Involved in cellular response to chemical stress and may contribute to resistance toward antimicrobial natural compounds as well as drugs. Catalyzes the methylation and detoxification of the P.aeruginosa toxin 2-heptyl-1-hydroxy-4(1H)-quinolinone (HQNO) to 2-heptyl-1-methoxy-4(1H)-quinolinone (HMOQ). Can also methylate 3-bromo-2-heptyl-1-hydroxy-4(1H)-quinolinone, and shows much lower activity with 1-hydroxyquinolin-4(1H)-one, quercetin, 4-hydroxyquinolin-2(1H)-one (DHQ) and 4-hydroxyisoquinolin-1(2H)-one. In Mycobacteroides abscessus (strain ATCC 19977 / DSM 44196 / CCUG 20993 / CIP 104536 / JCM 13569 / NCTC 13031 / TMC 1543 / L948) (Mycobacterium abscessus), this protein is 2-heptyl-1-hydroxyquinolin-4(1H)-one methyltransferase.